Reading from the N-terminus, the 338-residue chain is RNA 3'-terminal phosphate cyclase (338 aa).

Residues Gln103 and 283 to 287 each bind ATP; that span reads YLADQ. His308 functions as the Tele-AMP-histidine intermediate in the catalytic mechanism.

It belongs to the RNA 3'-terminal cyclase family. Type 1 subfamily.

The protein resides in the cytoplasm. The enzyme catalyses a 3'-end 3'-phospho-ribonucleotide-RNA + ATP = a 3'-end 2',3'-cyclophospho-ribonucleotide-RNA + AMP + diphosphate. Functionally, catalyzes the conversion of 3'-phosphate to a 2',3'-cyclic phosphodiester at the end of RNA. The mechanism of action of the enzyme occurs in 3 steps: (A) adenylation of the enzyme by ATP; (B) transfer of adenylate to an RNA-N3'P to produce RNA-N3'PP5'A; (C) and attack of the adjacent 2'-hydroxyl on the 3'-phosphorus in the diester linkage to produce the cyclic end product. The biological role of this enzyme is unknown but it is likely to function in some aspects of cellular RNA processing. This Escherichia coli O8 (strain IAI1) protein is RNA 3'-terminal phosphate cyclase.